The primary structure comprises 367 residues: Heparan sulfate glucosamine 3-O-sulfotransferase 2 (367 aa).

Over 1–19 the chain is Cytoplasmic; the sequence is MAYRVLGRAGPPQPRRARR. Residues 20–39 traverse the membrane as a helical; Signal-anchor for type II membrane protein segment; the sequence is LLFAFTLSLSCTYLCYSFLC. The Lumenal portion of the chain corresponds to 40–367; that stretch reads CCDDLGRSRL…ETVGQDFRWE (328 aa). A disordered region spans residues 61–110; sequence AGGQKLLQKSRPCDPSGPTPSEPSAPSAPAAAVPAPRLSGSNHSGSPKLG. A compositionally biased stretch (low complexity) spans 84 to 96; sequence SAPSAPAAAVPAP. Residue Asn102 is glycosylated (N-linked (GlcNAc...) asparagine). Position 124–128 (124–128) interacts with 3'-phosphoadenylyl sulfate; that stretch reads KGGTR. Residues 146–152 and 177–180 contribute to the substrate site; these read EPHFFDR and KTPS. Residue Asn193 is glycosylated (N-linked (GlcNAc...) asparagine). 3'-phosphoadenylyl sulfate is bound by residues Arg205 and Ser213. N-linked (GlcNAc...) asparagine glycosylation occurs at Asn235. 245 to 246 serves as a coordination point for substrate; it reads WN. Asn306 carries an N-linked (GlcNAc...) asparagine glycan. Cys313 and Cys325 are oxidised to a cystine. Residue 330–334 coordinates 3'-phosphoadenylyl sulfate; sequence KGRTH.

This sequence belongs to the sulfotransferase 1 family. As to expression, highly expressed in the brain and weakly expressed in the heart, placenta, lung and skeletal muscle.

It localises to the golgi apparatus membrane. The catalysed reaction is alpha-D-glucosaminyl-[heparan sulfate](n) + 3'-phosphoadenylyl sulfate = 3-sulfo-alpha-D-glucosaminyl-[heparan sulfate](n) + adenosine 3',5'-bisphosphate + H(+). In terms of biological role, sulfotransferase that utilizes 3'-phospho-5'-adenylyl sulfate (PAPS) to catalyze the transfer of a sulfo group to an N-unsubstituted glucosamine linked to a 2-O-sulfo iduronic acid unit on heparan sulfate. Catalyzes the O-sulfation of glucosamine in GlcA2S-GlcNS. Unlike HS3ST1/3-OST-1, does not convert non-anticoagulant heparan sulfate to anticoagulant heparan sulfate. This Homo sapiens (Human) protein is Heparan sulfate glucosamine 3-O-sulfotransferase 2 (HS3ST2).